The sequence spans 395 residues: Protein HIGH CHLOROPHYLL FLUORESCENCE PHENOTYPE 244, chloroplastic (395 aa).

The N-terminal 64 residues, 1 to 64, are a transit peptide targeting the chloroplast; that stretch reads MASLRLPAQL…ERSIVVPVTC (64 aa).

This sequence belongs to the NmrA-type oxidoreductase family. As to quaternary structure, component of a high molecular weight complex containing OHP1, OHP2 and HCF244, and PSII core proteins D1/D2, HCF136 and HCF173. Interacts with OHP1. Forms a trimeric complex with OHP1 and OHP2 that mutually stabilizes each subunit.

The protein localises to the plastid. It is found in the chloroplast stroma. It localises to the chloroplast thylakoid membrane. Functionally, auxiliary factor required, together with HCF173, for the biogenesis of photosystem II (PSII), especially for the synthesis of the reaction center proteins (e.g. D1), via the regulation of the corresponding mRNA (e.g. psbA) translation initiation (ribosomal loading) and stabilization. Forms a trimeric complex with OHP1 and OHP2 that is required to promote PSII core subunit assembly. The trimeric complex forms a transient PSII reaction center-like complex with PsbA, PsbD, PsbE, PsbF and PsbI subunits in thylakoids for early assembly of PSII as well as PSII repair. The trimeric complex is required for the recruitment of ribosomes to the psbA mRNA during PSII biogenesis and repair. In Arabidopsis thaliana (Mouse-ear cress), this protein is Protein HIGH CHLOROPHYLL FLUORESCENCE PHENOTYPE 244, chloroplastic.